A 225-amino-acid polypeptide reads, in one-letter code: 3-dehydroquinate dehydratase (225 aa).

3-dehydroquinate is bound by residues 30–32 (EWR) and Arg-62. The active-site Proton donor/acceptor is the His-118. Residue Lys-143 is the Schiff-base intermediate with substrate of the active site. 3-dehydroquinate is bound by residues Arg-186, Ser-205, and Gln-209.

It belongs to the type-I 3-dehydroquinase family. As to quaternary structure, homodimer.

The catalysed reaction is 3-dehydroquinate = 3-dehydroshikimate + H2O. It functions in the pathway metabolic intermediate biosynthesis; chorismate biosynthesis; chorismate from D-erythrose 4-phosphate and phosphoenolpyruvate: step 3/7. Functionally, involved in the third step of the chorismate pathway, which leads to the biosynthesis of aromatic amino acids. Catalyzes the cis-dehydration of 3-dehydroquinate (DHQ) and introduces the first double bond of the aromatic ring to yield 3-dehydroshikimate. The chain is 3-dehydroquinate dehydratase from Streptococcus thermophilus (strain ATCC BAA-250 / LMG 18311).